A 372-amino-acid polypeptide reads, in one-letter code: Carbamoyl phosphate synthase small chain (372 aa).

The segment at 1–186 is CPSase; sequence MTYCKRGTEG…IHQNNSPDII (186 aa). 3 residues coordinate L-glutamine: Ser52, Gly233, and Gly235. Residues 185–372 form the Glutamine amidotransferase type-1 domain; the sequence is IIVLVDCGIK…KKMVIKDEGN (188 aa). Cys261 acts as the Nucleophile in catalysis. L-glutamine contacts are provided by Leu262, Gln265, Asn303, Gly305, and Tyr306. Active-site residues include His345 and Glu347.

This sequence belongs to the CarA family. As to quaternary structure, composed of two chains; the small (or glutamine) chain promotes the hydrolysis of glutamine to ammonia, which is used by the large (or ammonia) chain to synthesize carbamoyl phosphate. Tetramer of heterodimers (alpha,beta)4.

The enzyme catalyses hydrogencarbonate + L-glutamine + 2 ATP + H2O = carbamoyl phosphate + L-glutamate + 2 ADP + phosphate + 2 H(+). The catalysed reaction is L-glutamine + H2O = L-glutamate + NH4(+). It functions in the pathway amino-acid biosynthesis; L-arginine biosynthesis; carbamoyl phosphate from bicarbonate: step 1/1. Its pathway is pyrimidine metabolism; UMP biosynthesis via de novo pathway; (S)-dihydroorotate from bicarbonate: step 1/3. Functionally, small subunit of the glutamine-dependent carbamoyl phosphate synthetase (CPSase). CPSase catalyzes the formation of carbamoyl phosphate from the ammonia moiety of glutamine, carbonate, and phosphate donated by ATP, constituting the first step of 2 biosynthetic pathways, one leading to arginine and/or urea and the other to pyrimidine nucleotides. The small subunit (glutamine amidotransferase) binds and cleaves glutamine to supply the large subunit with the substrate ammonia. The protein is Carbamoyl phosphate synthase small chain of Metallosphaera sedula (strain ATCC 51363 / DSM 5348 / JCM 9185 / NBRC 15509 / TH2).